We begin with the raw amino-acid sequence, 342 residues long: Heat-inducible transcription repressor HrcA (342 aa).

Belongs to the HrcA family.

Negative regulator of class I heat shock genes (grpE-dnaK-dnaJ and groELS operons). Prevents heat-shock induction of these operons. The chain is Heat-inducible transcription repressor HrcA from Mesoplasma florum (strain ATCC 33453 / NBRC 100688 / NCTC 11704 / L1) (Acholeplasma florum).